A 316-amino-acid polypeptide reads, in one-letter code: MLKRLANRQNGFASFSCSSVGLRYGRTNPSTKRSFSLFQSVADTFLTVHEASHIPWIVLVPLTTMTLRTLVTLPFSIWQRRRILKQQELRKLVQPITPIIKLRLAAVTNKKSRNAARISSNGSFMPLQLQNAGVLTPEQITLLAVKETRKRQKKLFKKYNVPLWKNALLPMVQIPLWVTVSMGIRTLTETQLIESFYPSWFSALGFSSFDLSSPLVAMPLLAPILVGTLAVLNVELNGRLMFSSSLSSQGIKTISRNSTRVQEAMTSILNVSRLGCVVMLAMSSQAPFLLSLYWISSQLFSLVQNIILNWIYPYQR.

The chain crosses the membrane as a helical span at residues 164–184 (WKNALLPMVQIPLWVTVSMGI). The Mitochondrial matrix portion of the chain corresponds to 185 to 213 (RTLTETQLIESFYPSWFSALGFSSFDLSS). A helical membrane pass occupies residues 214-234 (PLVAMPLLAPILVGTLAVLNV). At 235-274 (ELNGRLMFSSSLSSQGIKTISRNSTRVQEAMTSILNVSRL) the chain is on the mitochondrial intermembrane side. Residues 275–295 (GCVVMLAMSSQAPFLLSLYWI) form a helical membrane-spanning segment. Over 296–316 (SSQLFSLVQNIILNWIYPYQR) the chain is Mitochondrial matrix.

Belongs to the OXA1/ALB3/YidC family. In terms of assembly, interacts with PNT1 and MSS2.

Its subcellular location is the mitochondrion inner membrane. In terms of biological role, required for the insertion of integral membrane proteins into the mitochondrial inner membrane. Essential for the activity and assembly of cytochrome c oxidase. Plays a central role in the translocation and export of the C-terminal part of the COX2 protein into the mitochondrial intermembrane space. The protein is Cytochrome c oxidase assembly protein COX18, mitochondrial (COX18) of Saccharomyces cerevisiae (strain ATCC 204508 / S288c) (Baker's yeast).